Consider the following 163-residue polypeptide: Protein-export protein SecB (163 aa).

This sequence belongs to the SecB family. In terms of assembly, homotetramer, a dimer of dimers. One homotetramer interacts with 1 SecA dimer.

The protein localises to the cytoplasm. In terms of biological role, one of the proteins required for the normal export of preproteins out of the cell cytoplasm. It is a molecular chaperone that binds to a subset of precursor proteins, maintaining them in a translocation-competent state. It also specifically binds to its receptor SecA. This chain is Protein-export protein SecB, found in Pseudomonas aeruginosa (strain LESB58).